The chain runs to 147 residues: Submaxillary gland androgen-regulated protein 3A (147 aa).

An N-terminal signal peptide occupies residues 1–22 (MKPLNLVLGLCILVGCFLSCEC). Residues 27–128 (RRHDPRGPFP…ISITTPTARD (102 aa)) form a disordered region. Residues 33–105 (GPFPPPPPPH…PTPSIPPTGP (73 aa)) are compositionally biased toward pro residues. 3 consecutive repeat copies span residues 43-54 (GPGIGRPHPPPF), 55-66 (GPGIGRPPPPPF), and 67-78 (GPGIGRPPPPPP). The tract at residues 43 to 78 (GPGIGRPHPPPFGPGIGRPPPPPFGPGIGRPPPPPP) is 3 X 12 AA tandem repeats of G-P-G-I-G-R-P-[HP]-P-P-P-[PF]. Residues 108–127 (TVQATTMPAASISITTPTAR) show a composition bias toward polar residues.

This sequence belongs to the PROL1/PROL3 family. In terms of tissue distribution, secreted into saliva by submaxillary gland.

It is found in the secreted. Its function is as follows. May play a role in protection or detoxification. The protein is Submaxillary gland androgen-regulated protein 3A (Smr3a) of Mus musculus (Mouse).